Reading from the N-terminus, the 469-residue chain is Carboxypeptidase Q (469 aa).

A signal peptide spans M1–G19. The propeptide occupies A20–K42. Residues N59 and N159 are each glycosylated (N-linked (GlcNAc...) asparagine). Zn(2+) is bound by residues H288 and D300. E334 functions as the Nucleophile in the catalytic mechanism. Zn(2+) is bound at residue E335. N351 carries N-linked (GlcNAc...) asparagine glycosylation. D362 is a Zn(2+) binding site. N-linked (GlcNAc...) asparagine glycosylation is present at N394. Zn(2+) is bound at residue H432.

The protein belongs to the peptidase M28 family. As to quaternary structure, homodimer. The monomeric form is inactive while the homodimer is active.

The protein resides in the endoplasmic reticulum. Its subcellular location is the golgi apparatus. It localises to the lysosome. It is found in the secreted. In terms of biological role, carboxypeptidase that may play an important role in the hydrolysis of circulating peptides. Catalyzes more efficiently the hydrolysis of dipeptides with unsubstituted terminals into amino acids. The protein is Carboxypeptidase Q (cpq) of Xenopus laevis (African clawed frog).